A 930-amino-acid polypeptide reads, in one-letter code: MKLKDTLNLGKTAFPMRAGLPTKEPVWQKEWEDAKLYQRRQELNEGKPHFVLHDGPPYANGNIHVGHAMNHISKDIIIRSKSMSGFNAPYIPGWDTHGLPIEQVLAKQGVKRKEMDLVEYLKLCREYALSQVYKQRDDFKRLGMSGDWENLYVTLTPDYEAAQIRVFGEMANKGYIYRGAKPVYWSWSSESALAEAEIEYHDLVSTSLYYANKVKDGKGILDTDTYIVVWTTTPFTITASRGLTVGADIDYVLVQPASETRKFVVAAELLTSLSEKFGWADVQVLATYRGQELNHIVTEHPWDTAVDELVILGDHVTTDSGTGIVHTAPGFGEDDYNVGIANGLEVAVTVDERGIMMANAGPEFEGQFYDKVVPTVIEKLGNLLLAQEEISHSYPFDWRTKKPIIWRAVPQWFASVSKFRQEILDAIDKVKFHTEWGKVRLYNMIRDRGDWVISRQRAWGVPLPIFYAEDGTAIMTAETIEHVAQLFEVHGSSIWWERDAKDLLPEGFTHPGSPNGEFKKETDIMDVWFDSGSSWNGVLVNRPNLTYPADLYLEGSDQYRGWFNSSLITSVANHGVAPYKQILSQGFTLDGKGEKMSKSLGNTIAPSDVEKQFGAEILRLWVTSVDSSNDVRISMDILSQVSETYRKIRNTLRFLIANTSDFNPAQDVVAYDELRSVDKYMTIRFNQLVKTIRDAYADFEFLTIYKALVNFINVDLSAFYLDFAKDVVYIEGAKSLERRQMQTVFYDILVKITKLLTPILPHTAEEIWSYLEFEAEDFVQLSELPEAQTFANQEEVLDTWAAFMDFRGQAQKALEEARNAKVIGKSLEAHLTVYPNEVVKTLLEAVNSNVAQLLIVSDLTIAEGPAPEAAVSFEDVAFTVERAAGQVCDRCRRIDPTTAERSYQAVICDHCASIVEENFAEAVAEGFEEK.

The 'HIGH' region signature appears at 57-67 (PYANGNIHVGH). Residue Glu554 coordinates L-isoleucyl-5'-AMP. The 'KMSKS' region motif lies at 595–599 (KMSKS). Residue Lys598 coordinates ATP. The Zn(2+) site is built by Cys888, Cys891, Cys908, and Cys911.

This sequence belongs to the class-I aminoacyl-tRNA synthetase family. IleS type 1 subfamily. In terms of assembly, monomer. Zn(2+) is required as a cofactor.

The protein resides in the cytoplasm. It carries out the reaction tRNA(Ile) + L-isoleucine + ATP = L-isoleucyl-tRNA(Ile) + AMP + diphosphate. In terms of biological role, catalyzes the attachment of isoleucine to tRNA(Ile). As IleRS can inadvertently accommodate and process structurally similar amino acids such as valine, to avoid such errors it has two additional distinct tRNA(Ile)-dependent editing activities. One activity is designated as 'pretransfer' editing and involves the hydrolysis of activated Val-AMP. The other activity is designated 'posttransfer' editing and involves deacylation of mischarged Val-tRNA(Ile). The chain is Isoleucine--tRNA ligase from Streptococcus pneumoniae (strain CGSP14).